Consider the following 420-residue polypeptide: Tyrosine--tRNA ligase (420 aa).

Tyr-36 lines the L-tyrosine pocket. A 'HIGH' region motif is present at residues 41-50; sequence PTADSLHIGH. The L-tyrosine site is built by Tyr-170 and Gln-174. Positions 231-235 match the 'KMSKS' region motif; that stretch reads KFGKS. Lys-234 is an ATP binding site. Residues 353 to 420 enclose the S4 RNA-binding domain; that stretch reads TNIVEVLIET…KKKYFMVNYQ (68 aa).

This sequence belongs to the class-I aminoacyl-tRNA synthetase family. TyrS type 1 subfamily. As to quaternary structure, homodimer.

Its subcellular location is the cytoplasm. It catalyses the reaction tRNA(Tyr) + L-tyrosine + ATP = L-tyrosyl-tRNA(Tyr) + AMP + diphosphate + H(+). Its function is as follows. Catalyzes the attachment of tyrosine to tRNA(Tyr) in a two-step reaction: tyrosine is first activated by ATP to form Tyr-AMP and then transferred to the acceptor end of tRNA(Tyr). The polypeptide is Tyrosine--tRNA ligase (Staphylococcus aureus (strain COL)).